The chain runs to 121 residues: uncharacterized protein (121 aa).

Transmembrane regions (helical) follow at residues 1–21, 55–75, and 92–112; these read MILW…IMPV, LKYI…FCSI, and LFFK…IHFL.

The protein resides in the membrane. This is an uncharacterized protein from Saccharomyces cerevisiae (strain ATCC 204508 / S288c) (Baker's yeast).